The primary structure comprises 226 residues: Cytidylate kinase (226 aa).

10–18 (GPASSGKST) is a binding site for ATP.

This sequence belongs to the cytidylate kinase family. Type 1 subfamily.

The protein resides in the cytoplasm. It carries out the reaction CMP + ATP = CDP + ADP. The catalysed reaction is dCMP + ATP = dCDP + ADP. The sequence is that of Cytidylate kinase from Enterococcus faecalis (strain ATCC 700802 / V583).